Reading from the N-terminus, the 92-residue chain is MPNIKSAKKRVKVSERNRLINKAYKTRMKNSIKKVLLALQEGKSREEVEQLYKVAQSAIDKAAKIGAIHKNQASRRKSRLIAKINKHFASKE.

Belongs to the bacterial ribosomal protein bS20 family.

In terms of biological role, binds directly to 16S ribosomal RNA. In Thermosipho africanus (strain TCF52B), this protein is Small ribosomal subunit protein bS20.